Consider the following 413-residue polypeptide: Corticotropin-releasing factor receptor 2 (413 aa).

The segment at residues 1–22 is a signal peptide (not cleaved); it reads MDSTIFEIIIDEFDANCSLLDA. Residues 1–110 are Extracellular-facing; it reads MDSTIFEIII…CVPILDNKRK (110 aa). An N-linked (GlcNAc...) asparagine glycan is attached at asparagine 16. Cystine bridges form between cysteine 17-cysteine 53, cysteine 43-cysteine 86, and cysteine 67-cysteine 101. Asparagine 77, asparagine 89, and asparagine 97 each carry an N-linked (GlcNAc...) asparagine glycan. A helical membrane pass occupies residues 111-141; the sequence is YALHYKIALIINYLGHCISILALVIAFLLFL. Over 142–148 the chain is Cytoplasmic; it reads CLRSIRC. Residues 149-173 traverse the membrane as a helical segment; sequence LRNIIHWNLITTFILRNIMWFLLQM. Over 174-187 the chain is Extracellular; it reads IDHNIHESNEVWCR. An intrachain disulfide couples cysteine 186 to cysteine 256. A helical transmembrane segment spans residues 188-216; it reads CITTIYNYFVVTNFFWMFVEGCYLHTAIV. Residues 217-223 lie on the Cytoplasmic side of the membrane; sequence MTYSTDK. Residues 224–251 traverse the membrane as a helical segment; sequence LRKWVFLFIGWCIPSPIIVTWAICKLFY. Residues 252 to 267 are Extracellular-facing; sequence ENEQCWIGKEPGKYID. The chain crosses the membrane as a helical span at residues 268-293; it reads YIYQGRVILVLLINFVFLFNIVRILM. Residues 294–304 lie on the Cytoplasmic side of the membrane; it reads TKLRASTTSET. The chain crosses the membrane as a helical span at residues 305-329; it reads IQYRKAVKATLVLLPLLGITYMLFF. The Extracellular segment spans residues 330-336; sequence VNPGEDD. Residues 337–366 form a helical membrane-spanning segment; the sequence is VSQIVFIYFNSFLQSFQGFFVSVFYCFLNG. Topologically, residues 367–413 are cytoplasmic; sequence EVRSAARKRWHRWQDHHSLRVRVARAMSIPTSPTRISFHSIKQTAAV.

Belongs to the G-protein coupled receptor 2 family. In terms of processing, a N-glycosylation site within the signal peptide impedes its proper cleavage and function.

Its subcellular location is the cell membrane. In terms of biological role, G-protein coupled receptor for CRH (corticotropin-releasing factor), UCN (urocortin), UCN2 and UCN3. Has high affinity for UCN. Ligand binding causes a conformation change that triggers signaling via guanine nucleotide-binding proteins (G proteins) and down-stream effectors, such as adenylate cyclase. Promotes the activation of adenylate cyclase, leading to increased intracellular cAMP levels. This Xenopus laevis (African clawed frog) protein is Corticotropin-releasing factor receptor 2 (crhr2).